A 240-amino-acid polypeptide reads, in one-letter code: Cysteine-rich venom protein triflin (240 aa).

Residues 1–19 form the signal peptide; it reads MIAFIVLPILAAVLQQSSG. Positions 39 to 166 constitute an SCP domain; that stretch reads DLHNSLRRSV…KYSYFYVCQY (128 aa). Intrachain disulfides connect Cys-75/Cys-153, Cys-92/Cys-167, Cys-148/Cys-164, Cys-186/Cys-193, Cys-189/Cys-198, Cys-202/Cys-235, Cys-211/Cys-229, and Cys-220/Cys-233. The region spanning 202–235 is the ShKT domain; it reads CTRENEFTNCDSLVQKSSCQDNYMKSKCPASCFC.

It belongs to the CRISP family. As to quaternary structure, forms a stable, non-covalent complex with SSP-2. In terms of tissue distribution, expressed by the venom gland.

It localises to the secreted. In terms of biological role, blocks contraction of smooth muscle elicited by high potassium-induced depolarization. May target voltage-gated calcium channels (Cav) on smooth muscle. The protein is Cysteine-rich venom protein triflin of Protobothrops flavoviridis (Habu).